The following is a 155-amino-acid chain: Small ribosomal subunit protein uS7cz/uS7cy (155 aa).

The protein belongs to the universal ribosomal protein uS7 family. In terms of assembly, part of the 30S ribosomal subunit.

It localises to the plastid. The protein localises to the chloroplast. In terms of biological role, one of the primary rRNA binding proteins, it binds directly to 16S rRNA where it nucleates assembly of the head domain of the 30S subunit. In Pelargonium hortorum (Common geranium), this protein is Small ribosomal subunit protein uS7cz/uS7cy (rps7-A).